We begin with the raw amino-acid sequence, 684 residues long: Glycine--tRNA ligase beta subunit (684 aa).

It belongs to the class-II aminoacyl-tRNA synthetase family. Tetramer of two alpha and two beta subunits.

It localises to the cytoplasm. The enzyme catalyses tRNA(Gly) + glycine + ATP = glycyl-tRNA(Gly) + AMP + diphosphate. The sequence is that of Glycine--tRNA ligase beta subunit from Ectopseudomonas mendocina (strain ymp) (Pseudomonas mendocina).